Consider the following 84-residue polypeptide: Delta-thalatoxin-Tas1a (84 aa).

The signal sequence occupies residues 1-19 (MAYLKIVLVALMLVLAVSA). A propeptide spanning residues 20–33 (MRRPDQQDQDISVA) is cleaved from the precursor. 3 disulfide bridges follow: Cys38/Cys78, Cys40/Cys68, and Cys61/Cys79.

The protein belongs to the sea anemone sodium channel inhibitory toxin family. Type II subfamily.

It localises to the secreted. The protein localises to the nematocyst. Its function is as follows. Binds specifically to the voltage-gated sodium channel (Nav) and delays its inactivation. The polypeptide is Delta-thalatoxin-Tas1a (Thalassianthus aster (Fuzzy-tipped anemone)).